Consider the following 490-residue polypeptide: Cysteine--tRNA ligase (490 aa).

Zn(2+) is bound at residue C31. Positions 33 to 43 match the 'HIGH' region motif; sequence PTVYGDAHLGH. C226, H251, and E255 together coordinate Zn(2+). Positions 283–287 match the 'KMSKS' region motif; that stretch reads KMGKS. Residue K286 participates in ATP binding.

It belongs to the class-I aminoacyl-tRNA synthetase family. In terms of assembly, monomer. Requires Zn(2+) as cofactor.

The protein localises to the cytoplasm. It catalyses the reaction tRNA(Cys) + L-cysteine + ATP = L-cysteinyl-tRNA(Cys) + AMP + diphosphate. In Porphyromonas gingivalis (strain ATCC BAA-308 / W83), this protein is Cysteine--tRNA ligase.